We begin with the raw amino-acid sequence, 89 residues long: Progonadoliberin-1 (89 aa).

The N-terminal stretch at 1–23 (MKAFPTFALLFLVLLFSAHVSDA) is a signal peptide. Pyrrolidone carboxylic acid is present on Q24. G33 bears the Glycine amide mark.

Belongs to the GnRH family. As to expression, expressed in the forebrain from larval stages.

It localises to the secreted. In terms of biological role, stimulates the secretion of gonadotropins. The chain is Progonadoliberin-1 (gnrh1) from Xenopus laevis (African clawed frog).